The chain runs to 1321 residues: Bile salt export pump (1321 aa).

At 1–62 the chain is on the cytoplasmic side; that stretch reads MSDSVILRSV…FSSSKDNWLM (62 aa). In terms of domain architecture, ABC transmembrane type-1 1 spans 62–385; that stretch reads MFMGSVCALL…ASSCLEIFST (324 aa). Residues 63-83 form a helical membrane-spanning segment; that stretch reads FMGSVCALLHGMAQPGMIIVF. At 84–147 the chain is on the extracellular side; that stretch reads GILTDIFVEY…VIKFSGIYAG (64 aa). 4 N-linked (GlcNAc...) asparagine glycosylation sites follow: Asn109, Asn116, Asn122, and Asn125. Residues 148–168 traverse the membrane as a helical segment; that stretch reads VGVAVLILGYFQIRLWVITGA. At 169–215 the chain is on the cytoplasmic side; it reads RQIRKMRKFYFRRIMRMEIGWFDCTSVGELNSRFSDDINKIDEAIAD. Residues 216–236 traverse the membrane as a helical segment; that stretch reads QMALFLQRLSTALSGLLLGFY. The Extracellular segment spans residues 237-240; sequence RGWK. A helical membrane pass occupies residues 241–261; that stretch reads LTLVILAVSPLIGIGAAVIGL. Over 262 to 319 the chain is Cytoplasmic; that stretch reads SVAKFTELELKAYAKAGSIADEVLSSIRTVAAFGGENKEVERYEKNLMFAQRWGIWKG. A helical membrane pass occupies residues 320-340; sequence MVMGFFTGYMWCLIFFCYALA. Residues 341–353 are Extracellular-facing; that stretch reads FWYGSRLVLDEGE. A helical membrane pass occupies residues 354–374; it reads YTPGTLIQIFLCVIIAAMNIG. Over 375-755 the chain is Cytoplasmic; sequence NASSCLEIFS…KYNISEWPYI (381 aa). Positions 420–656 constitute an ABC transporter 1 domain; it reads IEFHNVTFHY…KGVYFMLVTL (237 aa). 455-462 lines the ATP pocket; it reads GSSGAGKS. Thr586 bears the Phosphothreonine mark. Ser587 is subject to Phosphoserine. The interval 651-674 is interaction with HAX1; it reads FMLVTLQSQEDNTHKETGIKGKDT. Basic and acidic residues predominate over residues 662–684; the sequence is NTHKETGIKGKDTTEGDTPERTF. Residues 662–722 form a disordered region; the sequence is NTHKETGIKG…PLAIGDHKSS (61 aa). Ser692, Ser703, and Ser706 each carry phosphoserine. Residues 755-1043 form the ABC transmembrane type-1 2 domain; that stretch reads ILVGALCAAI…TFSYTPSYAK (289 aa). A helical transmembrane segment spans residues 756 to 776; it reads LVGALCAAINGAVTPIYSLLF. Topologically, residues 777–794 are extracellular; that stretch reads SQILKTFSLVDKEQQRSE. A helical membrane pass occupies residues 795–815; that stretch reads IYSMCLFFVILGCVSLFTQFL. The Cytoplasmic portion of the chain corresponds to 816-869; sequence QGYNFAKSGELLTKRLRKFGFKAMLRQDIGWFDDLKNNPGVLTTRLATDASQVQ. A run of 2 helical transmembrane segments spans residues 870–890 and 891–911; these read GATG…FVAV and LIAF…FPFL. Over 912–979 the chain is Cytoplasmic; the sequence is ALSGAVQTKM…SYKTAIRKAN (68 aa). A helical transmembrane segment spans residues 980-1000; it reads VYGLCYAFSQGISFLANSAAY. Residues 1001–1011 are Extracellular-facing; the sequence is RYGGYLIVYED. Residues 1012–1032 traverse the membrane as a helical segment; it reads LNFSYVFRVVSSIAMSATAVG. Residues 1033 to 1321 lie on the Cytoplasmic side of the membrane; that stretch reads RTFSYTPSYA…KLVITGAPIS (289 aa). The 239-residue stretch at 1078–1316 folds into the ABC transporter 2 domain; sequence IDFIDCKFTY…KGAYYKLVIT (239 aa). ATP is bound at residue 1113 to 1120; the sequence is GSSGCGKS. Ser1321 carries the phosphoserine modification.

The protein belongs to the ABC transporter superfamily. ABCB family. Multidrug resistance exporter (TC 3.A.1.201) subfamily. In terms of assembly, interacts with HAX1. Interacts with the adapter protein complex 2 (AP-2) throught AP2A2 or AP2A1; this interaction regulates cell membrane expression of ABCB11 through its internalization in a clathrin-dependent manner and its subsequent degradation. Post-translationally, N-glycosylated. In terms of processing, ubiquitinated; short-chain ubiquitination regulates cell-Surface expression of ABCB11. Expressed predominantly, if not exclusively in the liver, where it was further localized to the canalicular microvilli and to subcanalicular vesicles of the hepatocytes by in situ.

Its subcellular location is the apical cell membrane. The protein localises to the recycling endosome membrane. It is found in the endosome. It localises to the cell membrane. It carries out the reaction cholate(in) + ATP + H2O = cholate(out) + ADP + phosphate + H(+). The catalysed reaction is taurocholate(in) + ATP + H2O = taurocholate(out) + ADP + phosphate + H(+). The enzyme catalyses glycocholate(in) + ATP + H2O = glycocholate(out) + ADP + phosphate + H(+). It catalyses the reaction glycochenodeoxycholate(in) + ATP + H2O = glycochenodeoxycholate(out) + ADP + phosphate + H(+). It carries out the reaction taurochenodeoxycholate(in) + ATP + H2O = taurochenodeoxycholate(out) + ADP + phosphate + H(+). The catalysed reaction is glycoursodeoxycholate(in) + ATP + H2O = glycoursodeoxycholate(out) + ADP + phosphate + H(+). The enzyme catalyses tauroursodeoxycholate(in) + ATP + H2O = tauroursodeoxycholate(out) + ADP + phosphate + H(+). It catalyses the reaction taurodeoxycholate(in) + ATP + H2O = taurodeoxycholate(out) + ADP + phosphate + H(+). It carries out the reaction taurolithocholate 3-sulfate(in) + ATP + H2O = taurolithocholate 3-sulfate(out) + ADP + phosphate + H(+). The catalysed reaction is pravastatin(in) + ATP + H2O = pravastatin(out) + ADP + phosphate + H(+). The uptake of taurocholate is inhibited by taurolithocholate sulfate with an IC(50) of 9 uM. Pravastatin competitively inhibits the transport of taurocholic acid. Cyclosporin A, glibenclamide, rifampicin and troglitazonestrongly competitively inhibit the transport activity of taurocholate. The canalicular transport activity of taurocholate is strongly dependent on canalicular membrane cholesterol content. The uptake of taurocholate is increased by short- and medium-chain fatty acids. Cholesterol increases transport capacity of taurocholate without affecting the affinity for the substrate. Catalyzes the transport of the major hydrophobic bile salts, such as taurine and glycine-conjugated cholic acid across the canalicular membrane of hepatocytes in an ATP-dependent manner, therefore participates in hepatic bile acid homeostasis and consequently to lipid homeostasis through regulation of biliary lipid secretion in a bile salts dependent manner. Transports taurine-conjugated bile salts more rapidly than glycine-conjugated bile salts. Also transports non-bile acid compounds, such as pravastatin and fexofenadine in an ATP-dependent manner and may be involved in their biliary excretion. The protein is Bile salt export pump of Mus musculus (Mouse).